The primary structure comprises 579 residues: Transcription factor MTB2 (579 aa).

Residues 373-439 (GGMQIDFTNS…PLNHVEAERQ (67 aa)) are disordered. The span at 382 to 392 (SRPVVSPVPTV) shows a compositional bias: low complexity. Composition is skewed to basic and acidic residues over residues 393 to 415 (ESEH…DERR) and 425 to 439 (NGRE…AERQ). Positions 428 to 441 (EEPLNHVEAERQRR) are basic motif; degenerate. The bHLH domain maps to 428 to 477 (EEPLNHVEAERQRREKLNQRFYALRAVVPNISKMDKASLLGDAIAHITDM). The helix-loop-helix motif stretch occupies residues 442–477 (EKLNQRFYALRAVVPNISKMDKASLLGDAIAHITDM).

It is found in the nucleus. Transcription factor that negatively regulates jasmonate (JA) signaling. Negatively regulates JA-dependent response to wounding, JA-induced expression of defense genes, JA-dependent responses against herbivorous insects, and JA-dependent resistance against Botrytis cinerea infection. Plays a positive role in resistance against the bacterial pathogen Pseudomonas syringae pv tomato DC3000. This chain is Transcription factor MTB2, found in Solanum lycopersicum (Tomato).